A 219-amino-acid polypeptide reads, in one-letter code: HTH-type transcriptional regulator LutR (219 aa).

Residues 1 to 56 (MIKNGELKPGDKLDSVQALAESFQVSRSAVREALSALKAMGLVEMKQGEGTYLKEF) enclose the HTH gntR-type domain. Positions 16-35 (VQALAESFQVSRSAVREALS) form a DNA-binding region, H-T-H motif.

In terms of biological role, negatively regulates the transcription of the lutABC operon, which is required for L-lactate utilization. LutR activity is regulated by lactate, since presence of L-lactate, that probably binds to LutR, leads to derepression of the operon. Also appears to be essential for bacilysin biosynthesis. This Bacillus subtilis (strain 168) protein is HTH-type transcriptional regulator LutR (lutR).